The primary structure comprises 299 residues: MQENTRLRIAIQKSGRLSKESIELLSECGVKMHIHEQSLIAFSTNLPIDILRVRDDDIPGLIFDGVVDLGIIGENVLEENELERQSLGENPSYKLLKKLDFGYCRLSLALPQENKFQNLKDFEGLRIATSYPQLLKRFMKENGINYKNCTLTGSVEVAPRANLADAICDLVSSGATLQANNLKEVKVIYESRACLIQKENALSKEKQALVDKIMLRVAGVMQARESKYIMLHAPKEKLDKIQALLPGVERPTILPLAHDEKNVALHMVSKENLFWETMEALKEEGASSILVLPIEKMLK.

The protein belongs to the ATP phosphoribosyltransferase family. Long subfamily. The cofactor is Mg(2+).

The protein localises to the cytoplasm. The catalysed reaction is 1-(5-phospho-beta-D-ribosyl)-ATP + diphosphate = 5-phospho-alpha-D-ribose 1-diphosphate + ATP. Its pathway is amino-acid biosynthesis; L-histidine biosynthesis; L-histidine from 5-phospho-alpha-D-ribose 1-diphosphate: step 1/9. Its activity is regulated as follows. Feedback inhibited by histidine. Its function is as follows. Catalyzes the condensation of ATP and 5-phosphoribose 1-diphosphate to form N'-(5'-phosphoribosyl)-ATP (PR-ATP). Has a crucial role in the pathway because the rate of histidine biosynthesis seems to be controlled primarily by regulation of HisG enzymatic activity. The polypeptide is ATP phosphoribosyltransferase (Campylobacter jejuni subsp. jejuni serotype O:2 (strain ATCC 700819 / NCTC 11168)).